The sequence spans 341 residues: UDP-3-O-acylglucosamine N-acyltransferase (341 aa).

Histidine 255 serves as the catalytic Proton acceptor.

Belongs to the transferase hexapeptide repeat family. LpxD subfamily. Homotrimer.

It catalyses the reaction a UDP-3-O-[(3R)-3-hydroxyacyl]-alpha-D-glucosamine + a (3R)-hydroxyacyl-[ACP] = a UDP-2-N,3-O-bis[(3R)-3-hydroxyacyl]-alpha-D-glucosamine + holo-[ACP] + H(+). Its pathway is bacterial outer membrane biogenesis; LPS lipid A biosynthesis. Functionally, catalyzes the N-acylation of UDP-3-O-acylglucosamine using 3-hydroxyacyl-ACP as the acyl donor. Is involved in the biosynthesis of lipid A, a phosphorylated glycolipid that anchors the lipopolysaccharide to the outer membrane of the cell. This chain is UDP-3-O-acylglucosamine N-acyltransferase, found in Granulibacter bethesdensis (strain ATCC BAA-1260 / CGDNIH1).